The primary structure comprises 323 residues: Aldo-keto reductase family 1 member C1 (323 aa).

NADP(+) is bound by residues 20-24 (GFGTY) and Asp-50. Tyr-24 contributes to the substrate binding site. The active-site Proton donor is Tyr-55. Residue His-117 coordinates substrate. NADP(+)-binding positions include 166–167 (SN), Gln-190, and 216–222 (YSALGSH). Substrate is bound by residues His-222 and Trp-227. An NADP(+)-binding site is contributed by 270–280 (KSYNEQRIREN).

Belongs to the aldo/keto reductase family. In terms of assembly, monomer. In terms of tissue distribution, expressed in liver, adrenal gland, intestine and kidney.

It localises to the cytoplasm. Its subcellular location is the cytosol. The enzyme catalyses a 3alpha-hydroxysteroid + NADP(+) = a 3-oxosteroid + NADPH + H(+). It catalyses the reaction a 3alpha-hydroxysteroid + NAD(+) = a 3-oxosteroid + NADH + H(+). It carries out the reaction (17R,20S)-17,20-dihydroxypregn-4-en-3-one + NADP(+) = 17alpha-hydroxyprogesterone + NADPH + H(+). The catalysed reaction is (17R,20S)-17,20-dihydroxypregn-4-en-3-one + NAD(+) = 17alpha-hydroxyprogesterone + NADH + H(+). The enzyme catalyses (20S)-hydroxypregn-4-en-3-one + NADP(+) = progesterone + NADPH + H(+). It catalyses the reaction (20S)-hydroxypregn-4-en-3-one + NAD(+) = progesterone + NADH + H(+). It carries out the reaction (1R,2R)-1,2-dihydrobenzene-1,2-diol + NADP(+) = catechol + NADPH + H(+). The catalysed reaction is (S)-indan-1-ol + NAD(+) = indan-1-one + NADH + H(+). The enzyme catalyses (S)-indan-1-ol + NADP(+) = indan-1-one + NADPH + H(+). It catalyses the reaction 5alpha-androstane-3alpha,17beta-diol + NADP(+) = 17beta-hydroxy-5alpha-androstan-3-one + NADPH + H(+). It carries out the reaction 5alpha-androstane-3beta,17beta-diol + NADP(+) = 17beta-hydroxy-5alpha-androstan-3-one + NADPH + H(+). The catalysed reaction is 5alpha-androstane-3alpha,17beta-diol + NAD(+) = 17beta-hydroxy-5alpha-androstan-3-one + NADH + H(+). The enzyme catalyses 17beta-hydroxy-5alpha-androstan-3-one + NADP(+) = 5alpha-androstan-3,17-dione + NADPH + H(+). It catalyses the reaction androsterone + NADP(+) = 5alpha-androstan-3,17-dione + NADPH + H(+). It carries out the reaction androsterone + NADPH + H(+) = 5alpha-androstane-3alpha,17beta-diol + NADP(+). The catalysed reaction is 5alpha-androstane-3alpha,17beta-diol + NAD(+) = androsterone + NADH + H(+). The enzyme catalyses 17beta-estradiol + NADP(+) = estrone + NADPH + H(+). It catalyses the reaction 17beta-estradiol + NAD(+) = estrone + NADH + H(+). It carries out the reaction testosterone + NADP(+) = androst-4-ene-3,17-dione + NADPH + H(+). The catalysed reaction is 20alpha-hydroxy-5beta-pregnan-3-one + NADP(+) = 5beta-pregnan-3,20-dione + NADPH + H(+). The enzyme catalyses 3beta-hydroxy-5beta-pregnane-20-one + NADP(+) = 5beta-pregnan-3,20-dione + NADPH + H(+). It catalyses the reaction 3beta-hydroxy-5beta-pregnane-20-one + NADPH + H(+) = 3beta,20alpha-dihydroxy-5beta-pregnane + NADP(+). It carries out the reaction (3beta,5alpha,17beta)-3-hydroxyandrostan-17-yl sulfate + NADP(+) = 5alpha-dihydrotestosterone sulfate + NADPH + H(+). Its pathway is steroid metabolism. Functionally, cytosolic aldo-keto reductase that catalyzes the NADH and NADPH-dependent reduction of ketosteroids to hydroxysteroids. Most probably acts as a reductase in vivo since the oxidase activity measured in vitro is inhibited by physiological concentrations of NADPH. Displays a broad positional specificity acting on positions 3, 17 and 20 of steroids and regulates the metabolism of hormones like estrogens and androgens. May also reduce conjugated steroids such as 5alpha-dihydrotestosterone sulfate. Displays affinity for bile acids. This chain is Aldo-keto reductase family 1 member C1 (AKR1C1), found in Macaca fuscata fuscata (Japanese macaque).